Reading from the N-terminus, the 217-residue chain is Uracil-DNA glycosylase (217 aa).

The Proton acceptor role is filled by Asp-62.

It belongs to the uracil-DNA glycosylase (UDG) superfamily. UNG family.

The protein localises to the cytoplasm. The catalysed reaction is Hydrolyzes single-stranded DNA or mismatched double-stranded DNA and polynucleotides, releasing free uracil.. Its function is as follows. Excises uracil residues from the DNA which can arise as a result of misincorporation of dUMP residues by DNA polymerase or due to deamination of cytosine. The polypeptide is Uracil-DNA glycosylase (Streptococcus pyogenes serotype M3 (strain ATCC BAA-595 / MGAS315)).